The sequence spans 40 residues: MITDVQLAIFSNVLGVFLFLLVVAYHYINANTGKIGPKAK.

Residues 1 to 4 (MITD) lie on the Lumenal side of the membrane. A helical transmembrane segment spans residues 5-25 (VQLAIFSNVLGVFLFLLVVAY). The Cytoplasmic segment spans residues 26 to 40 (HYINANTGKIGPKAK).

It belongs to the OST4 family. In terms of assembly, component of the oligosaccharyltransferase (OST) complex.

The protein localises to the endoplasmic reticulum membrane. Subunit of the oligosaccharyl transferase (OST) complex that catalyzes the initial transfer of a defined glycan (Glc(3)Man(9)GlcNAc(2) in eukaryotes) from the lipid carrier dolichol-pyrophosphate to an asparagine residue within an Asn-X-Ser/Thr consensus motif in nascent polypeptide chains, the first step in protein N-glycosylation. N-glycosylation occurs cotranslationally and the complex associates with the Sec61 complex at the channel-forming translocon complex that mediates protein translocation across the endoplasmic reticulum (ER). All subunits are required for a maximal enzyme activity. This is Dolichyl-diphosphooligosaccharide--protein glycosyltransferase subunit 4 from Drosophila willistoni (Fruit fly).